The chain runs to 435 residues: Endoglucanase EG-1 (435 aa).

The signal sequence occupies residues 1–20 (MARGTALLGLTSLLLGLVNG). Glutamine 21 carries the pyrrolidone carboxylic acid modification. Cystine bridges form between cysteine 38-cysteine 44, cysteine 71-cysteine 93, and cysteine 83-cysteine 89. N-linked (GlcNAc...) asparagine glycosylation is present at asparagine 109. Disulfide bonds link cysteine 160–cysteine 385, cysteine 192–cysteine 215, cysteine 196–cysteine 214, cysteine 235–cysteine 254, cysteine 243–cysteine 248, and cysteine 259–cysteine 335. Catalysis depends on glutamate 217, which acts as the Nucleophile. The Proton donor role is filled by glutamate 222. The N-linked (GlcNAc...) asparagine glycan is linked to asparagine 267.

This sequence belongs to the glycosyl hydrolase 7 (cellulase C) family.

The protein resides in the secreted. It carries out the reaction Endohydrolysis of (1-&gt;4)-beta-D-glucosidic linkages in cellulose, lichenin and cereal beta-D-glucans.. The biological conversion of cellulose to glucose generally requires three types of hydrolytic enzymes: (1) Endoglucanases which cut internal beta-1,4-glucosidic bonds; (2) Exocellobiohydrolases that cut the disaccharide cellobiose from the non-reducing end of the cellulose polymer chain; (3) Beta-1,4-glucosidases which hydrolyze the cellobiose and other short cello-oligosaccharides to glucose. The sequence is that of Endoglucanase EG-1 (EG-1) from Humicola insolens (Soft-rot fungus).